The primary structure comprises 1648 residues: AT-rich interactive domain-containing protein arid-1 (1648 aa).

Disordered regions lie at residues isoleucine 150–asparagine 270 and arginine 284–leucine 307. Composition is skewed to acidic residues over residues aspartate 166–glutamate 193, threonine 219–serine 228, and serine 251–alanine 260. Residues threonine 261–asparagine 270 show a composition bias toward polar residues. Positions alanine 655 to threonine 745 constitute an ARID domain. Disordered stretches follow at residues valine 763–threonine 935, serine 1095–aspartate 1563, and lysine 1628–proline 1648. Positions serine 848–aspartate 860 are enriched in acidic residues. 2 stretches are compositionally biased toward basic and acidic residues: residues histidine 861 to serine 878 and serine 925 to threonine 935. 2 stretches are compositionally biased toward acidic residues: residues aspartate 1102–aspartate 1112 and glycine 1145–lysine 1154. Positions glutamine 1165–glycine 1185 are enriched in low complexity. The segment covering tyrosine 1195–valine 1208 has biased composition (pro residues). The segment covering phenylalanine 1213–serine 1251 has biased composition (polar residues). Basic and acidic residues predominate over residues arginine 1313–histidine 1326. The segment covering isoleucine 1348–serine 1357 has biased composition (polar residues). A compositionally biased stretch (low complexity) spans alanine 1377–serine 1392. Over residues alanine 1393–proline 1404 the composition is skewed to pro residues. Low complexity-rich tracts occupy residues serine 1474–isoleucine 1486 and threonine 1531–threonine 1541. Polar residues predominate over residues arginine 1542–asparagine 1551.

It is found in the nucleus. Functionally, DNA-binding protein which modulates activity of several transcription factors. Plays a role in the modulation of endoplasmic reticulum (ER) homeostasis during chemical and pathogen stress, including exposure to the Gram-negative bacterium P.aeruginosa. This chain is AT-rich interactive domain-containing protein arid-1, found in Caenorhabditis elegans.